The sequence spans 890 residues: Kinesin-like protein KIF20A (890 aa).

Ser2 carries the post-translational modification N-acetylserine. Residues Ser7, Ser14, and Ser21 each carry the phosphoserine modification. The Kinesin motor domain maps to 64–507 (KVKVYLRVRP…AKFSAIASQL (444 aa)). 160 to 167 (GVTNSGKT) is an ATP binding site. Ser528 carries the post-translational modification Phosphoserine; by PLK1. A phosphoserine mark is found at Ser532, Ser662, Ser668, Ser685, and Ser825. A coiled-coil region spans residues 611-762 (LDTQKELLEE…ESLQSAERAC (152 aa)). The globular stretch occupies residues 763–890 (CHSTGAGKLR…LKSGPFGKKY (128 aa)). Residues 832-865 (TNQENQQPNQQPPGKKPFLRNLLPRTPTCQSSTD) form a disordered region. Thr857 carries the post-translational modification Phosphothreonine. A phosphoserine mark is found at Ser867, Ser878, and Ser883.

It belongs to the TRAFAC class myosin-kinesin ATPase superfamily. Kinesin family. In terms of processing, phosphorylated by PLK1 at Ser-528 during mitosis, creating a docking site for PLK1 and recruiting PLK1 at central spindle.

Its subcellular location is the golgi apparatus. The protein resides in the cytoplasm. It localises to the cytoskeleton. It is found in the spindle. Functionally, mitotic kinesin required for chromosome passenger complex (CPC)-mediated cytokinesis. Following phosphorylation by PLK1, involved in recruitment of PLK1 to the central spindle. Interacts with guanosine triphosphate (GTP)-bound forms of RAB6A and RAB6B. May act as a motor required for the retrograde RAB6 regulated transport of Golgi membranes and associated vesicles along microtubules. Has a microtubule plus end-directed motility. This Homo sapiens (Human) protein is Kinesin-like protein KIF20A (KIF20A).